Consider the following 189-residue polypeptide: Large ribosomal subunit protein bL17 (189 aa).

The tract at residues 126–189 is disordered; that stretch reads DRARRVKASQ…DADADEAPQN (64 aa). Over residues 139–180 the composition is skewed to low complexity; it reads QDAPSEPQAAEEPAAEEAVAATEAVAAPADAEATDAEAGSAD.

The protein belongs to the bacterial ribosomal protein bL17 family. As to quaternary structure, part of the 50S ribosomal subunit. Contacts protein L32.

In Mycobacterium marinum (strain ATCC BAA-535 / M), this protein is Large ribosomal subunit protein bL17.